The primary structure comprises 320 residues: PUP1 protein homolog (320 aa).

The next 2 membrane-spanning stretches (helical) occupy residues 66-85 (MWGGWLGFSAVFLTPFAYRY) and 100-119 (FVLGVMALFFATNFAGRSMY). Positions 205 to 320 (GGVFNGSPFM…QSGRYGGNRS (116 aa)) are disordered. Residue serine 230 is modified to Phosphoserine. Residues 253–266 (GDNSSSSSWENIRN) show a composition bias toward polar residues. The span at 267 to 284 (TSRDQSQESDASVDHESD) shows a compositional bias: basic and acidic residues.

It belongs to the PUP1 family.

The protein resides in the mitochondrion membrane. The chain is PUP1 protein homolog from Saccharomyces cerevisiae (strain ATCC 204508 / S288c) (Baker's yeast).